Reading from the N-terminus, the 928-residue chain is DNA-binding protein RFX6 (928 aa).

Disordered stretches follow at residues Met1–Pro22 and Pro53–Leu102. A compositionally biased stretch (basic and acidic residues) spans Ser92–Asp101. The segment at residues Thr124 to Glu199 is a DNA-binding region (RFX-type winged-helix).

Belongs to the RFX family. Interacts with RFX3.

The protein resides in the nucleus. Transcription factor required to direct islet cell differentiation during endocrine pancreas development. Specifically required for the differentiation of 4 of the 5 islet cell types and for the production of insulin. Not required for pancreatic PP (polypeptide-producing) cells differentiation. Acts downstream of NEUROG3 and regulates the transcription factors involved in beta-cell maturation and function, thereby restricting the expression of the beta-cell differentiation and specification genes, and thus the beta-cell fate choice. Activates transcription by forming a heterodimer with RFX3 and binding to the X-box in the promoter of target genes. Involved in glucose-stimulated insulin secretion by promoting insulin and L-type calcium channel gene transcription. This Ailuropoda melanoleuca (Giant panda) protein is DNA-binding protein RFX6 (RFX6).